The sequence spans 2157 residues: MAAFGLLSYEQRPLKRPRLGPPDVYPQDPKQKEDELTAVNVKQGFNNQPAFTGDEHGSARNIVINPSKIGAYFSSILAEKLKLNTFQDTGKKKPQVNAKDNYWLVTARSQSAIHSWFSDLAGNKPLAILAKKVPILSKKEDVFAYLAKYSVPMVRATWLIKMTCAYYSAISEAKIKKRQAPDPNLEWTQISTRYLREQLVKISDFYHMASSTGDGPVPVPPEVEQAMKQWEYNEKLAFHMFQEGMLEKHEYLTWILDVLEKIRPVDDSLLKLLLPLMLQYSDEFVQSAYLSRRLAYFCARRLSLLLSDSPNLLAAHSPHMIIGTNNTSIGTPSPGTPGPGMSPVQLAFSDFLSCAQHGPLVYGLSCMLQTVTLCCPSALVWNYSTNENKISNPGSPLDLLQVAPSSLPMPGGNTAFNQQVRARIYEVEQQIKQRGRAVEVRWSFDKCQESTAGVTISRVLHTLEVLDRHCFDRTDSSNSMETLYHKIFWANQNKDNQEVAPNDEAVVTLLCEWAVSCKRSGKHRAMAVAKLLEKRQAEIEAERCGESEVLDEKESISSASLAGSSLPVFQNVLLRFLDTQAPALSDPNSECEKVEFVNLVLLFCEFIRHDVFSHDAYMCTLISRGDLSVTASTGLRSPAGENSDEHYSKDHDMKMEIFSPMPGESCENINPSLSRRLSVNGEKLLKREKPRELIFPSNYDLLRHLQYATHFPIPLDESSSHECNQRTILLYGVGKERDEARHQLKKITKDILKILNKKGTTESGVGDEGQKARKTKQEVFPTPENVFTKLQLLSYFDQHQVTSQISNNVLEQITSFASGTSYHLPLAHHIQLIFDLMEPALNINGLIDFAIQLLNELSVVEAELLLKSSSLAGSYTTGLCVCIVAVLRRYHSCLILNPDQTAQVFEGLCGVVKHVVNPSECSSPERCILAYLYDLYVSCSHLRSKFGDLFSSACSKVKQTIYNNVMPANSNLRWDPDFMMDFIENPSARSINYSMLGKILNDNAANRYSFVCNTLMNVCMGHQDAGRINDIANFSSELTACCTVLSSEWLGVLKALCCSSNHVWGFNDVLCTVDVSDLSFHDSLATFIAILIARQCFSLEDVVQHVALPSLLAAACGDADAEPGARMTCRLLLHLFRAPQACFFPQGTGKPFPGIRSSCDRHLLAAAHNSIEVGAVFAVLKAIMMLGDAKIGSNNVNTMKNEDFGMRGLRRDGNAEDAWATSQNSKSYGKSISIETANLREYARYVLRTICQQEWVGEHCLKEPERLCTDKELILDPVLSNMQAQKLLQLICYPHGIKECTEGDNLQRQHIKRILQNLEQWTLRQSWLELQLMIKQCLKDPSSGSVAEMNNLLDNIAKATIEVFQQSADLNNNASNSGMSLFNPNTIGSVDPSSTRQNGIKTFLSSSERRGVWLVAPLIARLPTSVQGRVLKAAGEELEKGQHLGSSSKKERDRQKQKSMSLLSQQPFLSLVLTCLKGQDEQREGLLTSLQNQVNQILSNWREERYQDDTKARQMMHEALQLRLNLVGGMFDTVQRSTQGTTDWALLLLQIITSGTVDMHTNNELFTTVLDMLGVLINGTLASDLSSASPGGSEENKRAYMNLVKKLKKELGDKRSESIDKVRQLLPLPKQTCDVITCEPMGSLIDTKGNKIAGFDSIDKKQARGLQVSTKQKVSPWDLFEGQKNPAPLSWAWFGTVRVDRKVIKYEEQQHFLLYHTHTMPKPRSYYLEPLPLPPEEEEEELTSPVSQEPERKSAELSDQGKATADEEKKTKGRKRKTKSSSRIDEYQQTNLYRVPPNYSPMSSQMTHHPQPALWGYNLVSQPQQPSFFLQNPSLNPGGSRLDPAGSFVPTNTKQALSNMLQRRSGAMLQPPSLHAVTSQQQLLQMKLLQQQQQQQQQQQQQQQRLLRQAQTRPFQQGQPGDQAALFTAQARPSPQLPQYPGLQQAQTMPQGYTMYGTQMPLQQAAQQQPGGVVLSPSYNSRAYPAAHSSPALMERLRQLQQQPSGYVQQQASPYLQPVAGSQRLNHQALQQSPLVGGGIDAVLTPAHPNLPSVPLPQDPMRPRQQQVRQQQRLLQVWGREMQQPQQAPQPQQPSQTQSQALGLQAMQPQQPLFPRQGLQQTQQQQQTAALVRQLQKQLSSNQPQQGVTPCAHPSHF.

The tract at residues 1–31 (MAAFGLLSYEQRPLKRPRLGPPDVYPQDPKQ) is disordered. At Thr-462 the chain carries Phosphothreonine. Positions 1437–1456 (ELEKGQHLGSSSKKERDRQK) are enriched in basic and acidic residues. Disordered stretches follow at residues 1437–1461 (ELEK…KSMS), 1724–1807 (RSYY…SQMT), and 2040–2157 (IDAV…PSHF). Residues 1771–1780 (TKGRKRKTKS) are compositionally biased toward basic residues. Low complexity-rich tracts occupy residues 2063 to 2076 (PRQQ…RLLQ), 2083 to 2101 (QQPQ…QSQA), and 2116 to 2136 (RQGL…RQLQ). The segment covering 2137-2148 (KQLSSNQPQQGV) has biased composition (polar residues).

It belongs to the Mediator complex subunit 12 family. May be a component of the Mediator complex, which is known to be composed of MED1, MED4, MED6, MED7, MED8, MED9, MED10, MED11, MED12, MED13, MED13L, MED14, MED15, MED16, MED17, MED18, MED19, MED20, MED21, MED22, MED23, MED24, MED25, MED26, MED27, MED29, MED30, MED31, CCNC, CDK8 and CDC2L6/CDK11. The MED12, MED13, CCNC and CDK8 subunits form a distinct module termed the CDK8 module. Mediator containing the CDK8 module is less active than Mediator lacking this module in supporting transcriptional activation. Individual preparations of the Mediator complex lacking one or more distinct subunits have been variously termed ARC, CRSP, DRIP, PC2, SMCC and TRAP.

The protein resides in the nucleus. Functionally, may be a component of the Mediator complex, a coactivator involved in the regulated transcription of nearly all RNA polymerase II-dependent genes. Mediator functions as a bridge to convey information from gene-specific regulatory proteins to the basal RNA polymerase II transcription machinery. Mediator is recruited to promoters by direct interactions with regulatory proteins and serves as a scaffold for the assembly of a functional preinitiation complex with RNA polymerase II and the general transcription factors. The sequence is that of Mediator of RNA polymerase II transcription subunit 12-like protein (Med12l) from Mus musculus (Mouse).